The primary structure comprises 503 residues: Catalase (503 aa).

Residues 1 to 26 (MAKDDKRLTGLFGHPVSDRENSMTAG) are disordered. Catalysis depends on residues His56 and Asn129. Tyr339 serves as a coordination point for heme.

Belongs to the catalase family. In terms of assembly, homodimer. Requires heme as cofactor.

The catalysed reaction is 2 H2O2 = O2 + 2 H2O. Functionally, decomposes hydrogen peroxide into water and oxygen; serves to protect cells from the toxic effects of hydrogen peroxide. The polypeptide is Catalase (katA) (Staphylococcus haemolyticus (strain JCSC1435)).